The sequence spans 522 residues: Protein nucleotidyltransferase YdiU (522 aa).

Positions 101, 103, 104, 123, 135, 136, 193, and 200 each coordinate ATP. Catalysis depends on Asp270, which acts as the Proton acceptor. Asn271 and Asp280 together coordinate Mg(2+). An ATP-binding site is contributed by Asp280.

The protein belongs to the SELO family. It depends on Mg(2+) as a cofactor. The cofactor is Mn(2+).

It catalyses the reaction L-seryl-[protein] + ATP = 3-O-(5'-adenylyl)-L-seryl-[protein] + diphosphate. It carries out the reaction L-threonyl-[protein] + ATP = 3-O-(5'-adenylyl)-L-threonyl-[protein] + diphosphate. The catalysed reaction is L-tyrosyl-[protein] + ATP = O-(5'-adenylyl)-L-tyrosyl-[protein] + diphosphate. The enzyme catalyses L-histidyl-[protein] + UTP = N(tele)-(5'-uridylyl)-L-histidyl-[protein] + diphosphate. It catalyses the reaction L-seryl-[protein] + UTP = O-(5'-uridylyl)-L-seryl-[protein] + diphosphate. It carries out the reaction L-tyrosyl-[protein] + UTP = O-(5'-uridylyl)-L-tyrosyl-[protein] + diphosphate. In terms of biological role, nucleotidyltransferase involved in the post-translational modification of proteins. It can catalyze the addition of adenosine monophosphate (AMP) or uridine monophosphate (UMP) to a protein, resulting in modifications known as AMPylation and UMPylation. The sequence is that of Protein nucleotidyltransferase YdiU from Flavobacterium johnsoniae (strain ATCC 17061 / DSM 2064 / JCM 8514 / BCRC 14874 / CCUG 350202 / NBRC 14942 / NCIMB 11054 / UW101) (Cytophaga johnsonae).